A 202-amino-acid chain; its full sequence is GTP cyclohydrolase-2 (202 aa).

Residue 48–52 (RLHSE) coordinates GTP. The Zn(2+) site is built by cysteine 53, cysteine 64, and cysteine 66. GTP is bound by residues glutamine 69, 91-93 (EGR), and threonine 113. The active-site Proton acceptor is aspartate 125. The active-site Nucleophile is the arginine 127. Threonine 148 and lysine 153 together coordinate GTP.

It belongs to the GTP cyclohydrolase II family. The cofactor is Zn(2+).

The enzyme catalyses GTP + 4 H2O = 2,5-diamino-6-hydroxy-4-(5-phosphoribosylamino)-pyrimidine + formate + 2 phosphate + 3 H(+). The protein operates within cofactor biosynthesis; riboflavin biosynthesis; 5-amino-6-(D-ribitylamino)uracil from GTP: step 1/4. In terms of biological role, catalyzes the conversion of GTP to 2,5-diamino-6-ribosylamino-4(3H)-pyrimidinone 5'-phosphate (DARP), formate and pyrophosphate. The sequence is that of GTP cyclohydrolase-2 from Colwellia psychrerythraea (strain 34H / ATCC BAA-681) (Vibrio psychroerythus).